A 183-amino-acid chain; its full sequence is Hypoxanthine/guanine phosphoribosyltransferase (183 aa).

The protein belongs to the purine/pyrimidine phosphoribosyltransferase family. Archaeal HPRT subfamily. Homodimer.

The protein resides in the cytoplasm. It catalyses the reaction IMP + diphosphate = hypoxanthine + 5-phospho-alpha-D-ribose 1-diphosphate. The catalysed reaction is GMP + diphosphate = guanine + 5-phospho-alpha-D-ribose 1-diphosphate. The protein operates within purine metabolism; IMP biosynthesis via salvage pathway; IMP from hypoxanthine: step 1/1. Functionally, catalyzes a salvage reaction resulting in the formation of IMP that is energically less costly than de novo synthesis. In Methanocaldococcus vulcanius (strain ATCC 700851 / DSM 12094 / M7) (Methanococcus vulcanius), this protein is Hypoxanthine/guanine phosphoribosyltransferase.